The primary structure comprises 601 residues: NAD(+)--arginine ADP-ribosyltransferase Chelt (601 aa).

Positions 1–18 (MKTIISLIFIMFPLFVSA) are cleaved as a signal peptide. NAD(+) contacts are provided by residues 26–43 (ADSR…LYPR) and Glu-130. Glu-130 is an active-site residue. A disulfide bond links Cys-205 and Cys-220.

The protein belongs to the enterotoxin A family.

The protein localises to the secreted. It catalyses the reaction L-arginyl-[protein] + NAD(+) = N(omega)-(ADP-D-ribosyl)-L-arginyl-[protein] + nicotinamide + H(+). Its function is as follows. A probable mono(ADP-ribosyl)transferase, it may ADP-ribosylate Arg in target protein(s). Upon expression in yeast cells causes cell death. The protein is NAD(+)--arginine ADP-ribosyltransferase Chelt of Vibrio cholerae.